The sequence spans 321 residues: RNA/RNP complex-1-interacting phosphatase (321 aa).

Residues 1 to 11 (MNQHYGRHGRG) are compositionally biased toward basic residues. A disordered region spans residues 1 to 27 (MNQHYGRHGRGRGRDFAACAPPKKKGR). The Tyrosine-protein phosphatase domain maps to 60–207 (FEAKLMPEEC…LQKRHVRKNR (148 aa)). Cysteine 151 functions as the Phosphocysteine intermediate in the catalytic mechanism. 152-157 (THGLNR) provides a ligand contact to substrate. Arginine 157 acts as the Proton donor/acceptor in catalysis. Residues 205-262 (KNRNVSAPRTDGLEDSADPTEQVYTNNKPVKKKPRKNRRGGHLAPSQHFQHQTQSSPY) are disordered. A compositionally biased stretch (basic residues) spans 233 to 245 (PVKKKPRKNRRGG). Over residues 251 to 262 (QHFQHQTQSSPY) the composition is skewed to polar residues.

This sequence belongs to the protein-tyrosine phosphatase family. Non-receptor class dual specificity subfamily. In terms of assembly, monomer. May interact with SFRS7 and SFRS9/SRP30C.

The protein localises to the nucleus. Its subcellular location is the nucleus speckle. In terms of biological role, possesses RNA 5'-triphosphatase and diphosphatase activities, but displays a poor protein-tyrosine phosphatase activity. In addition, has phosphatase activity with ATP, ADP and O-methylfluorescein phosphate (in vitro). Binds to RNA. May participate in nuclear mRNA metabolism. The chain is RNA/RNP complex-1-interacting phosphatase (Dusp11) from Mus musculus (Mouse).